Consider the following 160-residue polypeptide: Cytochrome b6-f complex subunit 4 (160 aa).

The next 3 membrane-spanning stretches (helical) occupy residues 36 to 56, 95 to 115, and 127 to 147; these read ILYMFPICILGALGLIAGLAI, LLGIAGMAAIPLGLMLVPFIE, and PIAMTVFLFGTAAALWLGAGA.

It belongs to the cytochrome b family. PetD subfamily. The 4 large subunits of the cytochrome b6-f complex are cytochrome b6, subunit IV (17 kDa polypeptide, PetD), cytochrome f and the Rieske protein, while the 4 small subunits are PetG, PetL, PetM and PetN. The complex functions as a dimer.

The protein localises to the cellular thylakoid membrane. Functionally, component of the cytochrome b6-f complex, which mediates electron transfer between photosystem II (PSII) and photosystem I (PSI), cyclic electron flow around PSI, and state transitions. This chain is Cytochrome b6-f complex subunit 4, found in Synechocystis sp. (strain ATCC 27184 / PCC 6803 / Kazusa).